The sequence spans 195 residues: Inner membrane-spanning protein YciB (195 aa).

5 helical membrane passes run 34 to 54, 65 to 85, 88 to 108, 131 to 151, and 160 to 180; these read IYGA…ALWL, FTLG…EDTF, WKAP…HFIG, LNIA…YVVF, and FKVF…GLFL.

The protein belongs to the YciB family.

Its subcellular location is the cell inner membrane. Plays a role in cell envelope biogenesis, maintenance of cell envelope integrity and membrane homeostasis. This Pseudomonas aeruginosa (strain LESB58) protein is Inner membrane-spanning protein YciB.